A 422-amino-acid polypeptide reads, in one-letter code: Dihydroorotase (422 aa).

Zn(2+) is bound by residues His53 and His55. Substrate-binding positions include 55 to 57 (HFR) and Asn87. Zn(2+) contacts are provided by Glu138, His172, His223, and Asp291. The active site involves Asp291. Substrate is bound at residue His295.

It belongs to the metallo-dependent hydrolases superfamily. DHOase family. Class I DHOase subfamily. Requires Zn(2+) as cofactor.

The catalysed reaction is (S)-dihydroorotate + H2O = N-carbamoyl-L-aspartate + H(+). It functions in the pathway pyrimidine metabolism; UMP biosynthesis via de novo pathway; (S)-dihydroorotate from bicarbonate: step 3/3. Catalyzes the reversible cyclization of carbamoyl aspartate to dihydroorotate. In Halobacterium salinarum (strain ATCC 700922 / JCM 11081 / NRC-1) (Halobacterium halobium), this protein is Dihydroorotase.